A 280-amino-acid polypeptide reads, in one-letter code: Urease accessory protein UreD (280 aa).

This sequence belongs to the UreD family. As to quaternary structure, ureD, UreF and UreG form a complex that acts as a GTP-hydrolysis-dependent molecular chaperone, activating the urease apoprotein by helping to assemble the nickel containing metallocenter of UreC. The UreE protein probably delivers the nickel.

It localises to the cytoplasm. Functionally, required for maturation of urease via the functional incorporation of the urease nickel metallocenter. The sequence is that of Urease accessory protein UreD from Staphylococcus saprophyticus subsp. saprophyticus (strain ATCC 15305 / DSM 20229 / NCIMB 8711 / NCTC 7292 / S-41).